The primary structure comprises 143 residues: MDFIILLIAILALSSTPITIISGSVTNHTYSTTNSYTNVALSARKVVFPPPRQLGKDNSDDDDLICKTCKRLSEHRTCCFNYFCVDLFTNRFNCGSCGLVCIVGTRCCGGICVDIKKDNGNCGKCNNVCSPGQNCSFGLCVSA.

An N-terminal signal peptide occupies residues 1–23; sequence MDFIILLIAILALSSTPITIISG. Residues 76–87 form a sufficient for PI(4)P binding region; the sequence is RTCCFNYFCVDL. The interval 80–83 is sufficient for binding to the extracellular domain of PRK2; sequence FNYF. The tract at residues 88–115 is sufficient for PI(3)P binding; the sequence is FTNRFNCGSCGLVCIVGTRCCGGICVDI.

Belongs to the STIG1 family. In terms of assembly, interacts with PRK1 and PRK2 (via extracellular domain). In terms of tissue distribution, expressed in the stigma and the upper section of the style.

Its subcellular location is the secreted. The protein localises to the extracellular space. It is found in the apoplast. Promotes pollen tube growth. A C-terminal peptide is cleaved from the propeptide in the stigmatic exudate and represent the major form of STIG1. Binds phosphoinositol lipids. The binding of external phosphatidylinositol 3-phosphate (PI(3)P) and PRK2 by STIG1 induces a rapid intracellular reactive oxygen species elevation. The sequence is that of Protein STIG1 from Solanum lycopersicum (Tomato).